Reading from the N-terminus, the 207-residue chain is Ribosomal RNA small subunit methyltransferase G (207 aa).

S-adenosyl-L-methionine is bound by residues glycine 75, leucine 80, valine 126–glutamate 127, and arginine 141.

Belongs to the methyltransferase superfamily. RNA methyltransferase RsmG family.

The protein resides in the cytoplasm. It carries out the reaction guanosine(527) in 16S rRNA + S-adenosyl-L-methionine = N(7)-methylguanosine(527) in 16S rRNA + S-adenosyl-L-homocysteine. In terms of biological role, specifically methylates the N7 position of guanine in position 527 of 16S rRNA. The sequence is that of Ribosomal RNA small subunit methyltransferase G from Psychromonas ingrahamii (strain DSM 17664 / CCUG 51855 / 37).